A 353-amino-acid polypeptide reads, in one-letter code: UPF0283 membrane protein KPN78578_12740 (353 aa).

Helical transmembrane passes span 70–90 (MVSA…VQWT), 99–119 (WIAL…VGSL), and 213–233 (ESTL…FIAW).

Belongs to the UPF0283 family.

The protein resides in the cell inner membrane. The polypeptide is UPF0283 membrane protein KPN78578_12740 (Klebsiella pneumoniae subsp. pneumoniae (strain ATCC 700721 / MGH 78578)).